A 156-amino-acid polypeptide reads, in one-letter code: Transcriptional regulator MraZ (156 aa).

SpoVT-AbrB domains are found at residues 5–51 and 80–123; these read TFEK…GKAL and MAKL…SREA.

This sequence belongs to the MraZ family. As to quaternary structure, forms oligomers.

Its subcellular location is the cytoplasm. The protein resides in the nucleoid. In Caulobacter vibrioides (strain ATCC 19089 / CIP 103742 / CB 15) (Caulobacter crescentus), this protein is Transcriptional regulator MraZ.